A 211-amino-acid chain; its full sequence is Adenylyl-sulfate kinase (211 aa).

36–43 (GLSGSGKS) is a binding site for ATP. The Phosphoserine intermediate role is filled by serine 110.

It belongs to the APS kinase family.

It carries out the reaction adenosine 5'-phosphosulfate + ATP = 3'-phosphoadenylyl sulfate + ADP + H(+). The protein operates within sulfur metabolism; hydrogen sulfide biosynthesis; sulfite from sulfate: step 2/3. Catalyzes the synthesis of activated sulfate. In Buchnera aphidicola subsp. Schizaphis graminum (strain Sg), this protein is Adenylyl-sulfate kinase (cysC).